The primary structure comprises 630 residues: MNASSKRKIISQSEISKKIAVMNEEMQGFWANNSWDIRKCPHPSAIELSKNPALRNRWVRFERVKNLWLRTELKYFYFYHLNNGIWNAKTVWIRKGTVINKMLDFLDLKYPSITSITEVPIEKAMTEYRTYLTKRGVRITTTNYKITANQEKTPVKANSYYVTNLKQFMEFYENFYFDGEEWDKDVWDRRNLPLPDDKVNPTQYEYTINFKGFRNTYFKQLVKRYCKLRLNVDSFSYVSDIAQRLKEFFNFLDMKFKQVQRVHQLTRVEIEAYLSELNMMGIKPSTITGRISILEGLFSTLLRLEWDDVPSKILIYSEDYPKIPRAKPRFIDEFVLEQLNSHLDKLPEYIATMTMIVQECGMRISELCTLKKGCLLEDKDGDFFLKYYQWKMKKEHIVPISKEVALLIKVREDKVSEEFPDSEYLFPRKDGSPLKQETFRGELNKLAYEQNIVDKSGEIYRFHAHAFRHTVGTRMINNGMPQHIVQKFLGHESPEMTSRYAHIFDETLKNEFTKFQEKLVTNNGDVLDLDEDNEVDDVELQWFKKNINAQVLPNGYCRLPVVAGGCPHANACLDCTHFCTSKQFLPQHEEQLERTEELLAIAKDKQWQRQVETNSRVKERLEQIIGSLTG.

In terms of domain architecture, Core-binding (CB) spans 216 to 302 (TYFKQLVKRY…ILEGLFSTLL (87 aa)). Residues 326–513 (AKPRFIDEFV…FDETLKNEFT (188 aa)) form the Tyr recombinase domain. Active-site residues include Arg363, Lys391, His465, Arg468, and His491. The active-site O-(3'-phospho-DNA)-tyrosine intermediate is the Tyr500.

It belongs to the 'phage' integrase family.

Its function is as follows. One of three proteins encoded by transposon Tn554 required for its transposition. This chain is Transposase B from transposon Tn554 (tnpB1), found in Staphylococcus aureus (strain Mu50 / ATCC 700699).